Here is a 135-residue protein sequence, read N- to C-terminus: DNA-directed RNA polymerase subunit omega (135 aa).

Positions 84-106 (IAGHSSHVSPSRSSRHTGLGKSF) are disordered.

Belongs to the RNA polymerase subunit omega family. The RNAP catalytic core consists of 2 alpha, 1 beta, 1 beta' and 1 omega subunit. When a sigma factor is associated with the core the holoenzyme is formed, which can initiate transcription.

The catalysed reaction is RNA(n) + a ribonucleoside 5'-triphosphate = RNA(n+1) + diphosphate. In terms of biological role, promotes RNA polymerase assembly. Latches the N- and C-terminal regions of the beta' subunit thereby facilitating its interaction with the beta and alpha subunits. The sequence is that of DNA-directed RNA polymerase subunit omega from Anaplasma phagocytophilum (strain HZ).